Consider the following 100-residue polypeptide: Aspartyl/glutamyl-tRNA(Asn/Gln) amidotransferase subunit C (100 aa).

The protein belongs to the GatC family. In terms of assembly, heterotrimer of A, B and C subunits.

The enzyme catalyses L-glutamyl-tRNA(Gln) + L-glutamine + ATP + H2O = L-glutaminyl-tRNA(Gln) + L-glutamate + ADP + phosphate + H(+). The catalysed reaction is L-aspartyl-tRNA(Asn) + L-glutamine + ATP + H2O = L-asparaginyl-tRNA(Asn) + L-glutamate + ADP + phosphate + 2 H(+). Its function is as follows. Allows the formation of correctly charged Asn-tRNA(Asn) or Gln-tRNA(Gln) through the transamidation of misacylated Asp-tRNA(Asn) or Glu-tRNA(Gln) in organisms which lack either or both of asparaginyl-tRNA or glutaminyl-tRNA synthetases. The reaction takes place in the presence of glutamine and ATP through an activated phospho-Asp-tRNA(Asn) or phospho-Glu-tRNA(Gln). The protein is Aspartyl/glutamyl-tRNA(Asn/Gln) amidotransferase subunit C of Streptococcus pneumoniae (strain JJA).